A 357-amino-acid chain; its full sequence is Uroporphyrinogen decarboxylase (357 aa).

Substrate contacts are provided by residues 30 to 34 (RQAGR), aspartate 79, tyrosine 154, serine 209, and histidine 336.

Belongs to the uroporphyrinogen decarboxylase family. As to quaternary structure, homodimer.

It localises to the cytoplasm. It catalyses the reaction uroporphyrinogen III + 4 H(+) = coproporphyrinogen III + 4 CO2. It participates in porphyrin-containing compound metabolism; protoporphyrin-IX biosynthesis; coproporphyrinogen-III from 5-aminolevulinate: step 4/4. Functionally, catalyzes the decarboxylation of four acetate groups of uroporphyrinogen-III to yield coproporphyrinogen-III. In Mycobacterium bovis (strain ATCC BAA-935 / AF2122/97), this protein is Uroporphyrinogen decarboxylase.